We begin with the raw amino-acid sequence, 276 residues long: Phosducin-like protein 1 (276 aa).

A phosphoserine mark is found at serine 18, serine 19, serine 20, and serine 42. The disordered stretch occupies residues 18–74 (SSSEGEDNGDEGGDNKGASGKSRCSGLTIDTNPDATPAGGFRQQSSTNTGPKGVVKD). In terms of domain architecture, Phosducin spans 62–272 (SSTNTGPKGV…LIEHGIIVDR (211 aa)). Residues 153–276 (FGQVQQLTSH…GIIVDRALYN (124 aa)) are thioredoxin fold.

The protein belongs to the phosducin family. In terms of assembly, forms a complex with the beta and gamma subunits of the GTP-binding proteins. Interacts with the CCT chaperonin complex.

Functionally, functions as a co-chaperone for CCT in the assembly of heterotrimeric G protein complexes, facilitates the assembly of both Gbeta-Ggamma and RGS-Gbeta5 heterodimers. This chain is Phosducin-like protein 1, found in Drosophila melanogaster (Fruit fly).